The primary structure comprises 390 residues: Leu/Ile/Val-binding protein homolog 6 (390 aa).

Residues 1–21 form the signal peptide; that stretch reads MKKIALTALAVFSLAASAAYA.

It belongs to the leucine-binding protein family.

In terms of biological role, component of an amino-acid transport system. This chain is Leu/Ile/Val-binding protein homolog 6, found in Brucella suis biovar 1 (strain 1330).